Here is a 122-residue protein sequence, read N- to C-terminus: Large ribosomal subunit protein bL12 (122 aa).

The protein belongs to the bacterial ribosomal protein bL12 family. As to quaternary structure, homodimer. Part of the ribosomal stalk of the 50S ribosomal subunit. Forms a multimeric L10(L12)X complex, where L10 forms an elongated spine to which 2 to 4 L12 dimers bind in a sequential fashion. Binds GTP-bound translation factors.

Forms part of the ribosomal stalk which helps the ribosome interact with GTP-bound translation factors. Is thus essential for accurate translation. The sequence is that of Large ribosomal subunit protein bL12 from Buchnera aphidicola subsp. Cinara cedri (strain Cc).